The following is a 157-amino-acid chain: uncharacterized protein (157 aa).

A helical membrane pass occupies residues 6–26; sequence LVGGVLRVLVVVGAVFDVAVL. A Ricin B-type lectin domain is found at 33-157; sequence ADGPVQLKSR…APDQQWDSVP (125 aa).

It is found in the membrane. This is an uncharacterized protein from Mycobacterium tuberculosis (strain CDC 1551 / Oshkosh).